Consider the following 169-residue polypeptide: Transcription antitermination protein NusB (169 aa).

The span at 1–19 (MAEMKKTIDNKPAPKGEKK) shows a compositional bias: basic and acidic residues. The segment at 1–22 (MAEMKKTIDNKPAPKGEKKANR) is disordered.

It belongs to the NusB family.

Involved in transcription antitermination. Required for transcription of ribosomal RNA (rRNA) genes. Binds specifically to the boxA antiterminator sequence of the ribosomal RNA (rrn) operons. The polypeptide is Transcription antitermination protein NusB (Rhodopseudomonas palustris (strain BisB18)).